The following is a 130-amino-acid chain: Small ribosomal subunit protein uS11 (130 aa).

This sequence belongs to the universal ribosomal protein uS11 family. As to quaternary structure, part of the 30S ribosomal subunit. Interacts with proteins S7 and S18. Binds to IF-3.

Located on the platform of the 30S subunit, it bridges several disparate RNA helices of the 16S rRNA. Forms part of the Shine-Dalgarno cleft in the 70S ribosome. In Sulfurimonas denitrificans (strain ATCC 33889 / DSM 1251) (Thiomicrospira denitrificans (strain ATCC 33889 / DSM 1251)), this protein is Small ribosomal subunit protein uS11.